The sequence spans 207 residues: MGKGTLYIVSAPSGAGKSSLISAMLEKNPTYAMKVSVSHTTRGMRPGEQDGVHYHFVEKEHFEDLITKGEFLEYAEVFGNYYGTSRVWIENTLDKGIDVFLDIDWQGARQIREQMPHAKSIFILPPSNGELERRLNTRGQDSEAVIAKRMAEAKSEISHYNEYDYVIINDDFDTALMDFKAIIRAERLKQDKQAAKYSGMLDALLAE.

The Guanylate kinase-like domain maps to 4–184; it reads GTLYIVSAPS…ALMDFKAIIR (181 aa). ATP is bound at residue 11–18; that stretch reads APSGAGKS.

It belongs to the guanylate kinase family.

The protein resides in the cytoplasm. The catalysed reaction is GMP + ATP = GDP + ADP. Essential for recycling GMP and indirectly, cGMP. In Vibrio vulnificus (strain CMCP6), this protein is Guanylate kinase.